The chain runs to 796 residues: Lon protease (796 aa).

The 195-residue stretch at 19-213 (LPVVVTRGIF…LLKELIINRP (195 aa)) folds into the Lon N-terminal domain. Residue 376–383 (GPPGVGKT) coordinates ATP. One can recognise a Lon proteolytic domain in the interval 612-793 (ESQVGVVTGL…EDVYEIIFKN (182 aa)). Catalysis depends on residues serine 699 and lysine 742.

Belongs to the peptidase S16 family. Homohexamer. Organized in a ring with a central cavity.

The protein resides in the cytoplasm. The catalysed reaction is Hydrolysis of proteins in presence of ATP.. ATP-dependent serine protease that mediates the selective degradation of mutant and abnormal proteins as well as certain short-lived regulatory proteins. Required for cellular homeostasis and for survival from DNA damage and developmental changes induced by stress. Degrades polypeptides processively to yield small peptide fragments that are 5 to 10 amino acids long. Binds to DNA in a double-stranded, site-specific manner. The protein is Lon protease of Mycoplasma mycoides subsp. mycoides SC (strain CCUG 32753 / NCTC 10114 / PG1).